Here is a 240-residue protein sequence, read N- to C-terminus: DNA repair protein RecO (240 aa).

The protein belongs to the RecO family.

Involved in DNA repair and RecF pathway recombination. This Wolbachia pipientis wMel protein is DNA repair protein RecO.